Reading from the N-terminus, the 245-residue chain is 1-(5-phosphoribosyl)-5-[(5-phosphoribosylamino)methylideneamino] imidazole-4-carboxamide isomerase (245 aa).

The Proton acceptor role is filled by Asp-8. The active-site Proton donor is the Asp-130.

It belongs to the HisA/HisF family.

Its subcellular location is the cytoplasm. The enzyme catalyses 1-(5-phospho-beta-D-ribosyl)-5-[(5-phospho-beta-D-ribosylamino)methylideneamino]imidazole-4-carboxamide = 5-[(5-phospho-1-deoxy-D-ribulos-1-ylimino)methylamino]-1-(5-phospho-beta-D-ribosyl)imidazole-4-carboxamide. It functions in the pathway amino-acid biosynthesis; L-histidine biosynthesis; L-histidine from 5-phospho-alpha-D-ribose 1-diphosphate: step 4/9. The chain is 1-(5-phosphoribosyl)-5-[(5-phosphoribosylamino)methylideneamino] imidazole-4-carboxamide isomerase from Pseudomonas putida (strain W619).